Consider the following 248-residue polypeptide: Pulmonary surfactant-associated protein A (248 aa).

Positions 1–20 are cleaved as a signal peptide; the sequence is MSLGSLAFTLFLTVVAGIKC. N21 carries an N-linked (GlcNAc...) asparagine glycan. In terms of domain architecture, Collagen-like spans 28 to 100; it reads GSPGIPGTPG…PGERGLPGFP (73 aa). The segment at 28 to 100 is disordered; the sequence is GSPGIPGTPG…PGERGLPGFP (73 aa). 4-hydroxyproline occurs at positions 30, 33, 36, 42, 54, 57, 63, 67, 70, and 76. Residues 42 to 51 are compositionally biased toward basic and acidic residues; that stretch reads PGRDGRDGIK. The segment covering 54–65 has biased composition (pro residues); sequence PGPPGPMGPPGG. The segment covering 69–82 has biased composition (low complexity); that stretch reads LPGRDGLPGAPGAP. Basic and acidic residues predominate over residues 84-93; the sequence is EHGDKGEPGE. A C-type lectin domain is found at 132 to 248; the sequence is LSVGDKVFST…LQYRLAICEF (117 aa). Intrachain disulfides connect C155–C246 and C224–C238. Residue N207 is glycosylated (N-linked (GlcNAc...) asparagine). The Ca(2+) site is built by E215, R217, N234, and D235.

The protein belongs to the SFTPA family. Oligomeric complex of 6 set of homotrimers.

The protein localises to the secreted. It is found in the extracellular space. Its subcellular location is the extracellular matrix. The protein resides in the surface film. Functionally, in presence of calcium ions, it binds to surfactant phospholipids and contributes to lower the surface tension at the air-liquid interface in the alveoli of the mammalian lung and is essential for normal respiration. Enhances the expression of MYO18A/SP-R210 on alveolar macrophages. This Mus musculus (Mouse) protein is Pulmonary surfactant-associated protein A (Sftpa1).